Here is a 568-residue protein sequence, read N- to C-terminus: Proline--tRNA ligase (568 aa).

The protein belongs to the class-II aminoacyl-tRNA synthetase family. ProS type 1 subfamily. Homodimer.

It localises to the cytoplasm. The enzyme catalyses tRNA(Pro) + L-proline + ATP = L-prolyl-tRNA(Pro) + AMP + diphosphate. Its function is as follows. Catalyzes the attachment of proline to tRNA(Pro) in a two-step reaction: proline is first activated by ATP to form Pro-AMP and then transferred to the acceptor end of tRNA(Pro). As ProRS can inadvertently accommodate and process non-cognate amino acids such as alanine and cysteine, to avoid such errors it has two additional distinct editing activities against alanine. One activity is designated as 'pretransfer' editing and involves the tRNA(Pro)-independent hydrolysis of activated Ala-AMP. The other activity is designated 'posttransfer' editing and involves deacylation of mischarged Ala-tRNA(Pro). The misacylated Cys-tRNA(Pro) is not edited by ProRS. This chain is Proline--tRNA ligase, found in Campylobacter jejuni subsp. jejuni serotype O:6 (strain 81116 / NCTC 11828).